Reading from the N-terminus, the 355-residue chain is D-alanine--D-alanine ligase (355 aa).

The region spanning 143–350 (KQIFSNLSIP…IDQLVAKLID (208 aa)) is the ATP-grasp domain. Residue 178 to 233 (IEKLNLPVFVKPANSGSSLGISKAKNKSEIIKALQKAWEIDSRIVIEEGLNVRELE) participates in ATP binding. 3 residues coordinate Mg(2+): D303, E317, and N319.

The protein belongs to the D-alanine--D-alanine ligase family. It depends on Mg(2+) as a cofactor. Mn(2+) is required as a cofactor.

The protein resides in the cytoplasm. The enzyme catalyses 2 D-alanine + ATP = D-alanyl-D-alanine + ADP + phosphate + H(+). The protein operates within cell wall biogenesis; peptidoglycan biosynthesis. Its function is as follows. Cell wall formation. In Prochlorococcus marinus (strain MIT 9515), this protein is D-alanine--D-alanine ligase.